We begin with the raw amino-acid sequence, 152 residues long: Large ribosomal subunit protein bL9 (152 aa).

The protein belongs to the bacterial ribosomal protein bL9 family.

Functionally, binds to the 23S rRNA. This Synechococcus sp. (strain WH7803) protein is Large ribosomal subunit protein bL9.